The chain runs to 900 residues: Bifunctional uridylyltransferase/uridylyl-removing enzyme (900 aa).

A uridylyltransferase region spans residues Met1–Pro342. Positions Leu343–Thr705 are uridylyl-removing. The HD domain occupies Val461–Leu583. ACT domains follow at residues Gln706 to Arg789 and Ile816 to Ser896.

The protein belongs to the GlnD family. It depends on Mg(2+) as a cofactor.

It carries out the reaction [protein-PII]-L-tyrosine + UTP = [protein-PII]-uridylyl-L-tyrosine + diphosphate. It catalyses the reaction [protein-PII]-uridylyl-L-tyrosine + H2O = [protein-PII]-L-tyrosine + UMP + H(+). Its activity is regulated as follows. Uridylyltransferase (UTase) activity is inhibited by glutamine, while glutamine activates uridylyl-removing (UR) activity. Modifies, by uridylylation and deuridylylation, the PII regulatory proteins (GlnB and homologs), in response to the nitrogen status of the cell that GlnD senses through the glutamine level. Under low glutamine levels, catalyzes the conversion of the PII proteins and UTP to PII-UMP and PPi, while under higher glutamine levels, GlnD hydrolyzes PII-UMP to PII and UMP (deuridylylation). Thus, controls uridylylation state and activity of the PII proteins, and plays an important role in the regulation of nitrogen fixation and metabolism. This is Bifunctional uridylyltransferase/uridylyl-removing enzyme from Stutzerimonas stutzeri (strain A1501) (Pseudomonas stutzeri).